A 204-amino-acid chain; its full sequence is High frequency lysogenization protein HflD homolog (204 aa).

The protein belongs to the HflD family.

Its subcellular location is the cytoplasm. It localises to the cell inner membrane. This is High frequency lysogenization protein HflD homolog from Stenotrophomonas maltophilia (strain K279a).